A 58-amino-acid chain; its full sequence is Conotoxin TxXIIIA (58 aa).

The first 22 residues, M1–A22, serve as a signal peptide directing secretion. A propeptide spanning residues E23 to K46 is cleaved from the precursor.

Homodimer; disulfide-linked. Post-translationally, 5 disulfide bonds are present in each homodimer: two intrachain disulfide bonds per subunit, and one interchain disulfide bond linking the two subunits. Expressed by the venom duct.

The protein resides in the secreted. This chain is Conotoxin TxXIIIA, found in Conus textile (Cloth-of-gold cone).